The sequence spans 243 residues: 7-carboxy-7-deazaguanine synthase (243 aa).

Substrate is bound by residues 15–17 (IQG) and Arg30. Positions 21–239 (VIGQKTMFVR…PQLHTLLWGN (219 aa)) constitute a Radical SAM core domain. [4Fe-4S] cluster is bound by residues Cys34, Cys38, and Cys41. Residue Ser43 coordinates Mg(2+). Ser81 contributes to the substrate binding site. Residues Gly83 and 127–129 (SPK) each bind S-adenosyl-L-methionine.

It belongs to the radical SAM superfamily. 7-carboxy-7-deazaguanine synthase family. Homodimer. Requires [4Fe-4S] cluster as cofactor. S-adenosyl-L-methionine is required as a cofactor. The cofactor is Mg(2+).

It carries out the reaction 6-carboxy-5,6,7,8-tetrahydropterin + H(+) = 7-carboxy-7-deazaguanine + NH4(+). Its pathway is purine metabolism; 7-cyano-7-deazaguanine biosynthesis. Catalyzes the complex heterocyclic radical-mediated conversion of 6-carboxy-5,6,7,8-tetrahydropterin (CPH4) to 7-carboxy-7-deazaguanine (CDG), a step common to the biosynthetic pathways of all 7-deazapurine-containing compounds. The protein is 7-carboxy-7-deazaguanine synthase of Bacillus subtilis (strain 168).